We begin with the raw amino-acid sequence, 54 residues long: Salt stress-induced hydrophobic peptide ESI3 (54 aa).

Transmembrane regions (helical) follow at residues 2-22 (GSATVLEVILAIILPPVGVFL) and 34-54 (LLLTILGYIPGIIYAVYVLVV).

The protein belongs to the UPF0057 (PMP3) family.

Its subcellular location is the membrane. The chain is Salt stress-induced hydrophobic peptide ESI3 (ESI3) from Thinopyrum elongatum (Tall wheatgrass).